Reading from the N-terminus, the 358-residue chain is UDP-3-O-acylglucosamine N-acyltransferase (358 aa).

His252 serves as the catalytic Proton acceptor.

Belongs to the transferase hexapeptide repeat family. LpxD subfamily. Homotrimer.

It carries out the reaction a UDP-3-O-[(3R)-3-hydroxyacyl]-alpha-D-glucosamine + a (3R)-hydroxyacyl-[ACP] = a UDP-2-N,3-O-bis[(3R)-3-hydroxyacyl]-alpha-D-glucosamine + holo-[ACP] + H(+). Its pathway is bacterial outer membrane biogenesis; LPS lipid A biosynthesis. Its function is as follows. Catalyzes the N-acylation of UDP-3-O-acylglucosamine using 3-hydroxyacyl-ACP as the acyl donor. Is involved in the biosynthesis of lipid A, a phosphorylated glycolipid that anchors the lipopolysaccharide to the outer membrane of the cell. The polypeptide is UDP-3-O-acylglucosamine N-acyltransferase (Paraburkholderia phymatum (strain DSM 17167 / CIP 108236 / LMG 21445 / STM815) (Burkholderia phymatum)).